The chain runs to 313 residues: MAQIALCCTSHSPLLNLPGPSRELLDDIGSALAVARDFVTEFDPDLVVTFSPDHYNGFFYKVMPPFCVGTSAQGVGDYGTHAGPLDVPEDLANELATAVLEAGVDVAISASMDVDHGTVQPLQNLFGDAMARPVIPVFINSVATPLGPLRRTRALGTAIGRYLATLDKRVLVIGSGGLSHDPPVPTLATAPPAALDRIVHGAPMSTEQRMARQSAVIDAAHAFAHGESPLQPLNPAWDATFLEILDEGWLSDLDGWSNAFIAREGGNSAHEIRTWVAAFAALAAGGDYRTGLRFYRAAPELIAGFAIRTAVLA.

The active-site Proton donor is the His-116. His-180 (proton acceptor) is an active-site residue.

This sequence belongs to the LigB/MhpB extradiol dioxygenase family. As to quaternary structure, homotetramer. Fe(2+) serves as cofactor.

The catalysed reaction is 3-(2,3-dihydroxyphenyl)propanoate + O2 = (2Z,4E)-2-hydroxy-6-oxonona-2,4-dienedioate + H(+). It carries out the reaction (2E)-3-(2,3-dihydroxyphenyl)prop-2-enoate + O2 = (2Z,4E,7E)-2-hydroxy-6-oxonona-2,4,7-trienedioate + H(+). Its pathway is aromatic compound metabolism; 3-phenylpropanoate degradation. Functionally, catalyzes the non-heme iron(II)-dependent oxidative cleavage of 2,3-dihydroxyphenylpropionic acid and 2,3-dihydroxicinnamic acid into 2-hydroxy-6-ketononadienedioate and 2-hydroxy-6-ketononatrienedioate, respectively. This Mycobacterium sp. (strain MCS) protein is 2,3-dihydroxyphenylpropionate/2,3-dihydroxicinnamic acid 1,2-dioxygenase.